A 509-amino-acid chain; its full sequence is Monocarboxylate transporter 9 (509 aa).

Residues 1–12 (MELKKSPDGGWG) are Cytoplasmic-facing. A run of 12 helical transmembrane segments spans residues 13–33 (WVIV…PLAV), 53–73 (WVGS…SLCV), 80–100 (PVTI…SFAP), 102–122 (IYFL…LLYT), 137–157 (GLAL…YAAL), 164–184 (FYGL…ILAC), 305–325 (VFSA…PPSL), 342–362 (IMPL…LLGI), 372–392 (LYLY…IPFA), 398–418 (LALL…FPYV), 433–453 (GILM…VGWF), and 462–482 (IAFY…LLAA). Residues 483-509 (LPSWDTCNKQLPKPAPTTFLYKVASNV) lie on the Cytoplasmic side of the membrane.

It belongs to the major facilitator superfamily. Monocarboxylate porter (TC 2.A.1.13) family.

It localises to the cell membrane. The enzyme catalyses creatine(in) = creatine(out). It carries out the reaction (R)-carnitine(in) = (R)-carnitine(out). Its function is as follows. Extracellular pH-and Na(+)-sensitive low-affinity creatine transporter. Also functions as a pH-independent carnitine efflux transporter. This chain is Monocarboxylate transporter 9 (SLC16A9), found in Pongo abelii (Sumatran orangutan).